The chain runs to 74 residues: Anaphase-promoting complex subunit 13 (74 aa).

Residues 33-53 (LNELPEPEQDNGGTTESVKEQ) are disordered.

This sequence belongs to the APC13 family. In terms of assembly, the mammalian APC/C is composed at least of 14 distinct subunits ANAPC1, ANAPC2, CDC27/APC3, ANAPC4, ANAPC5, CDC16/APC6, ANAPC7, CDC23/APC8, ANAPC10, ANAPC11, CDC26/APC12, ANAPC13, ANAPC15 and ANAPC16 that assemble into a complex of at least 19 chains with a combined molecular mass of around 1.2 MDa; APC/C interacts with FZR1 and FBXO5.

Its subcellular location is the nucleus. Its pathway is protein modification; protein ubiquitination. Its function is as follows. Component of the anaphase promoting complex/cyclosome (APC/C), a cell cycle-regulated E3 ubiquitin ligase that controls progression through mitosis and the G1 phase of the cell cycle. The APC/C complex acts by mediating ubiquitination and subsequent degradation of target proteins: it mainly mediates the formation of 'Lys-11'-linked polyubiquitin chains and, to a lower extent, the formation of 'Lys-48'- and 'Lys-63'-linked polyubiquitin chains. The APC/C complex catalyzes assembly of branched 'Lys-11'-/'Lys-48'-linked branched ubiquitin chains on target proteins. The polypeptide is Anaphase-promoting complex subunit 13 (ANAPC13) (Bos taurus (Bovine)).